A 345-amino-acid polypeptide reads, in one-letter code: Ribosome production factor 1 (345 aa).

Disordered regions lie at residues 1–57 and 70–105; these read MAKA…ISEI and WKQQQRKEKLAAKKKLKREREALGDKAPPKPVPKTI. Residues 87–97 show a composition bias toward basic and acidic residues; it reads REREALGDKAP. Residues 142–325 form the Brix domain; that stretch reads PKILITTSDR…LRSLQKGTFD (184 aa). The RNA-binding stretch occupies residues 303-320; that stretch reads VGIQELGPRFTLKLRSLQ.

Its subcellular location is the nucleus. It is found in the nucleolus. May be required for ribosome biogenesis. This Rattus norvegicus (Rat) protein is Ribosome production factor 1 (Rpf1).